Reading from the N-terminus, the 312-residue chain is Ribonuclease Z (312 aa).

His62, His64, Asp66, His67, His144, Asp215, and His273 together coordinate Zn(2+). Asp66 serves as the catalytic Proton acceptor.

It belongs to the RNase Z family. As to quaternary structure, homodimer. Requires Zn(2+) as cofactor.

The catalysed reaction is Endonucleolytic cleavage of RNA, removing extra 3' nucleotides from tRNA precursor, generating 3' termini of tRNAs. A 3'-hydroxy group is left at the tRNA terminus and a 5'-phosphoryl group is left at the trailer molecule.. In terms of biological role, zinc phosphodiesterase, which displays some tRNA 3'-processing endonuclease activity. Probably involved in tRNA maturation, by removing a 3'-trailer from precursor tRNA. This is Ribonuclease Z from Prochlorococcus marinus (strain MIT 9215).